A 274-amino-acid polypeptide reads, in one-letter code: Endonuclease 8-like L720 (274 aa).

An FPG-type; degenerate zinc finger spans residues 241–274 (RIYRKSLCPLGHKTIRKKIGLRNRMTTWCPVCQL).

Belongs to the FPG family.

In Acanthamoeba polyphaga mimivirus (APMV), this protein is Endonuclease 8-like L720.